We begin with the raw amino-acid sequence, 260 residues long: Phosphate import ATP-binding protein PstB (260 aa).

The region spanning 14 to 255 is the ABC transporter domain; it reads IETENLNLFY…PKNTKTEEYI (242 aa). 46–53 provides a ligand contact to ATP; it reads GPSGCGKS.

Belongs to the ABC transporter superfamily. Phosphate importer (TC 3.A.1.7) family. The complex is composed of two ATP-binding proteins (PstB), two transmembrane proteins (PstC and PstA) and a solute-binding protein (PstS).

The protein resides in the cell inner membrane. It carries out the reaction phosphate(out) + ATP + H2O = ADP + 2 phosphate(in) + H(+). Functionally, part of the ABC transporter complex PstSACB involved in phosphate import. Responsible for energy coupling to the transport system. This is Phosphate import ATP-binding protein PstB from Borreliella burgdorferi (strain ATCC 35210 / DSM 4680 / CIP 102532 / B31) (Borrelia burgdorferi).